The primary structure comprises 304 residues: Lipoprotein signal peptidase (304 aa).

Helical transmembrane passes span 28 to 48 (IKIKYPILAVMGFFVLLIVFV), 86 to 106 (PAVPYLLQSLLTIIFLITFIF), and 112 to 132 (LIVLLPLITFGGLANVIDRSV). Residues Asp-148 and Asp-163 contribute to the active site. Residues 163 to 183 (DICIVTGFALIFLTFVVDIFL) traverse the membrane as a helical segment.

The protein belongs to the peptidase A8 family.

The protein localises to the cell membrane. It carries out the reaction Release of signal peptides from bacterial membrane prolipoproteins. Hydrolyzes -Xaa-Yaa-Zaa-|-(S,diacylglyceryl)Cys-, in which Xaa is hydrophobic (preferably Leu), and Yaa (Ala or Ser) and Zaa (Gly or Ala) have small, neutral side chains.. It functions in the pathway protein modification; lipoprotein biosynthesis (signal peptide cleavage). In terms of biological role, this protein specifically catalyzes the removal of signal peptides from prolipoproteins. This Mycoplasmoides gallisepticum (strain R(low / passage 15 / clone 2)) (Mycoplasma gallisepticum) protein is Lipoprotein signal peptidase.